We begin with the raw amino-acid sequence, 478 residues long: Ninja-family protein 8 (478 aa).

3 disordered regions span residues 1 to 247, 337 to 374, and 454 to 478; these read MDDD…LTPG, FTAKDKADQTGTKQVDDGKKPQEAGASSSAHAEDEKKA, and DAPAQDNSATLPAFPAGNQATSAEN. Residues 23 to 35 are compositionally biased toward basic and acidic residues; the sequence is KARDAPLEPKAEP. Positions 169–179 are enriched in polar residues; it reads ISISTDDGSTG. Residues 180–189 show a composition bias toward acidic residues; that stretch reads ENEDVAESEA. Residues 233 to 242 are compositionally biased toward low complexity; the sequence is SFSGSESSSG. The span at 339-358 shows a compositional bias: basic and acidic residues; it reads AKDKADQTGTKQVDDGKKPQ.

The protein belongs to the Ninja family.

The protein localises to the nucleus. This Zea mays (Maize) protein is Ninja-family protein 8.